The following is a 228-amino-acid chain: Putative N-acetylmannosamine-6-phosphate 2-epimerase (228 aa).

The protein belongs to the NanE family.

The enzyme catalyses an N-acyl-D-glucosamine 6-phosphate = an N-acyl-D-mannosamine 6-phosphate. It participates in amino-sugar metabolism; N-acetylneuraminate degradation; D-fructose 6-phosphate from N-acetylneuraminate: step 3/5. Its function is as follows. Converts N-acetylmannosamine-6-phosphate (ManNAc-6-P) to N-acetylglucosamine-6-phosphate (GlcNAc-6-P). The protein is Putative N-acetylmannosamine-6-phosphate 2-epimerase of Thermosynechococcus vestitus (strain NIES-2133 / IAM M-273 / BP-1).